Reading from the N-terminus, the 139-residue chain is Trafficking protein particle complex subunit 2-like protein (139 aa).

This sequence belongs to the TRAPP small subunits family. Sedlin subfamily.

Its subcellular location is the cytoplasm. The protein resides in the perinuclear region. The protein localises to the endoplasmic reticulum. It is found in the golgi apparatus. Functionally, may play a role in vesicular transport from endoplasmic reticulum to Golgi. This chain is Trafficking protein particle complex subunit 2-like protein (TRAPPC2L), found in Taeniopygia guttata (Zebra finch).